Reading from the N-terminus, the 608-residue chain is Kelch-like protein 10 (608 aa).

Positions 39-106 (CDVVIKVNGF…AYTRTVPITP (68 aa)) constitute a BTB domain. 6 Kelch repeats span residues 292–339 (ILFA…YLKG), 340–386 (YVYI…VLSN), 388–433 (IYAM…TLYG), 434–480 (KVYI…AYGE), 481–527 (HVYA…VVDD), and 529–574 (LFVV…VVPG). S501 is modified (phosphoserine).

In terms of assembly, self-associates. Interacts with CUL3; indicative for the participation in an E3 ubiquitin ligase complex. As to expression, testis specific.

The protein resides in the cytoplasm. It functions in the pathway protein modification; protein ubiquitination. May be a substrate-specific adapter of a CUL3-based E3 ubiquitin-protein ligase complex which mediates the ubiquitination and subsequent proteasomal degradation of target proteins during spermatogenesis. Required for male fertility. This chain is Kelch-like protein 10 (Klhl10), found in Mus musculus (Mouse).